The primary structure comprises 240 residues: Peptidyl-tRNA hydrolase 2 (240 aa).

Tyrosine 60 serves as a coordination point for tRNA. Catalysis depends on histidine 65, which acts as the Proton acceptor. Tyrosine 111, asparagine 113, and asparagine 159 together coordinate tRNA.

Belongs to the PTH family. In terms of assembly, monomer.

Its subcellular location is the cytoplasm. The enzyme catalyses an N-acyl-L-alpha-aminoacyl-tRNA + H2O = an N-acyl-L-amino acid + a tRNA + H(+). Hydrolyzes ribosome-free peptidyl-tRNAs (with 1 or more amino acids incorporated), which drop off the ribosome during protein synthesis, or as a result of ribosome stalling. In terms of biological role, catalyzes the release of premature peptidyl moieties from peptidyl-tRNA molecules trapped in stalled 50S ribosomal subunits, and thus maintains levels of free tRNAs and 50S ribosomes. The polypeptide is Peptidyl-tRNA hydrolase 2 (Corynebacterium jeikeium (strain K411)).